Consider the following 1564-residue polypeptide: NACHT domain- and WD repeat-containing protein 1 (1564 aa).

In terms of domain architecture, NACHT spans 335-661 (TPLVLFGPPG…LLAIAHRQLV (327 aa)). 341–348 (GPPGIGKT) serves as a coordination point for ATP. 14 WD repeats span residues 866-905 (GCHK…VIHM), 908-947 (GHTG…EKFT), 956-994 (PAEP…PVFH), 998-1037 (DASD…LQGK), 1044-1082 (KEET…LLEK), 1083-1121 (LPDA…RRFM), 1126-1165 (EHED…TLLD), 1167-1207 (LEGV…RSRV), 1212-1251 (LDRT…EQDS), 1253-1290 (DTSS…RQDV), 1291-1327 (ICIP…VLDI), 1338-1376 (GPRY…LYEC), 1380-1418 (KAFP…WDLQ), and 1425-1462 (EMSY…VWSV).

As to quaternary structure, may interact with HSP90AA1, HSP90AB1 and BAG2. Expressed at highest levels in prostate, followed by testis, retina, trachea and optic nerve. Also detected in brain, epididymis, lung, vagina and pituitary. In the prostate, tends to be up-regulated during malignant progression compared to normal epithelium (at protein level).

It is found in the cytoplasm. The protein localises to the cytosol. Functionally, may play a role in the control of androgen receptor (AR) protein steady-state levels. This is NACHT domain- and WD repeat-containing protein 1 (NWD1) from Homo sapiens (Human).